Consider the following 245-residue polypeptide: Ribonuclease 3 (245 aa).

Positions 19-148 (FKVFQEKIGI…FIGALYLDQG (130 aa)) constitute an RNase III domain. Residue glutamate 61 participates in Mg(2+) binding. Residue aspartate 65 is part of the active site. Aspartate 134 and glutamate 137 together coordinate Mg(2+). Glutamate 137 is an active-site residue. The region spanning 174-243 (DYKSQLQELI…AAEALKKLKE (70 aa)) is the DRBM domain.

It belongs to the ribonuclease III family. Homodimer. Mg(2+) is required as a cofactor.

Its subcellular location is the cytoplasm. The catalysed reaction is Endonucleolytic cleavage to 5'-phosphomonoester.. Its function is as follows. Digests double-stranded RNA. Involved in the processing of primary rRNA transcript to yield the immediate precursors to the large and small rRNAs (23S and 16S). Processes some mRNAs, and tRNAs when they are encoded in the rRNA operon. Processes pre-crRNA and tracrRNA of type II CRISPR loci if present in the organism. The protein is Ribonuclease 3 of Bacillus cereus (strain ATCC 14579 / DSM 31 / CCUG 7414 / JCM 2152 / NBRC 15305 / NCIMB 9373 / NCTC 2599 / NRRL B-3711).